The chain runs to 376 residues: O-demethylpuromycin-O-methyltransferase (376 aa).

The interval 1-28 (MAPTEATRGGPADPAPAPEAHRGGHTEH) is disordered. Over residues 19–28 (EAHRGGHTEH) the composition is skewed to basic and acidic residues. S-adenosyl-L-methionine-binding positions include aspartate 235 and 261–263 (GDF). Histidine 281 acts as the Proton acceptor in catalysis.

It belongs to the class I-like SAM-binding methyltransferase superfamily. Cation-independent O-methyltransferase family.

It carries out the reaction O-demethylpuromycin + S-adenosyl-L-methionine = puromycin + S-adenosyl-L-homocysteine + H(+). In Streptomyces alboniger, this protein is O-demethylpuromycin-O-methyltransferase (dmpM).